A 437-amino-acid chain; its full sequence is Glutamyl-tRNA reductase (437 aa).

Residues 49–52 (TCNR), Ser-109, 114–116 (EVQ), and Gln-120 contribute to the substrate site. The Nucleophile role is filled by Cys-50. 189-194 (GAGDTA) is a binding site for NADP(+).

It belongs to the glutamyl-tRNA reductase family. Homodimer.

The catalysed reaction is (S)-4-amino-5-oxopentanoate + tRNA(Glu) + NADP(+) = L-glutamyl-tRNA(Glu) + NADPH + H(+). It participates in porphyrin-containing compound metabolism; protoporphyrin-IX biosynthesis; 5-aminolevulinate from L-glutamyl-tRNA(Glu): step 1/2. It functions in the pathway porphyrin-containing compound metabolism; chlorophyll biosynthesis. Functionally, catalyzes the NADPH-dependent reduction of glutamyl-tRNA(Glu) to glutamate 1-semialdehyde (GSA). The sequence is that of Glutamyl-tRNA reductase from Chloroherpeton thalassium (strain ATCC 35110 / GB-78).